The sequence spans 1651 residues: A.superbus venom factor 2 (1651 aa).

An N-terminal signal peptide occupies residues M1–G22. Residue N189 is glycosylated (N-linked (GlcNAc...) asparagine). P519, D542, V543, and D545 together coordinate Mg(2+). 12 disulfides stabilise this stretch: C547–C808, C616–C651, C684–C711, C685–C718, C698–C719, C864–C1501, C1346–C1477, C1377–C1446, C1494–C1499, C1506–C1578, C1525–C1649, and C1625–C1634. Residues R657 to R739 constitute a propeptide that is removed on maturation. The tract at residues S661–R739 is C3a-like domain. Positions C684–C719 constitute an Anaphylatoxin-like domain. The tract at residues E743–S754 is factor B binding site. Residues H992–Y1269 constitute a propeptide that is removed on maturation. A C3d-like domain region spans residues H992–Y1269. Residues V1197–T1259 form a factor H binding site region. N1282 and N1352 each carry an N-linked (GlcNAc...) asparagine glycan. Residues C1506–C1649 enclose the NTR domain.

Belongs to the venom complement C3 homolog family. As to quaternary structure, heterotrimer of alpha, beta and gamma chains; disulfide-linked. Is active with factor B in the presence of factor D. In terms of processing, first processed by the removal of 4 Arg residues by furin-type protease, forming two chains, alpha and gamma/beta precursor, linked by a disulfide bond. This mature AVF is composed of three chains: alpha, gamma and beta. As to expression, expressed by the venom gland.

The protein localises to the secreted. Complement-activating protein in snake venom. It is a structural and functional analog of complement component C3b, the activated form of C3. It binds factor B (CFB), which is subsequently cleaved by factor D (CFD) to form the bimolecular complex AVF/Bb. AVF/Bb is a C3 convertase that cleaves complement component C3, but not C5 (as do CVF/Bb). The chain is A.superbus venom factor 2 from Austrelaps superbus (Lowland copperhead snake).